We begin with the raw amino-acid sequence, 119 residues long: Holo-[acyl-carrier-protein] synthase (119 aa).

Mg(2+) is bound by residues Asp7 and Glu56.

This sequence belongs to the P-Pant transferase superfamily. AcpS family. It depends on Mg(2+) as a cofactor.

It is found in the cytoplasm. The catalysed reaction is apo-[ACP] + CoA = holo-[ACP] + adenosine 3',5'-bisphosphate + H(+). Functionally, transfers the 4'-phosphopantetheine moiety from coenzyme A to a Ser of acyl-carrier-protein. The sequence is that of Holo-[acyl-carrier-protein] synthase from Chlamydia trachomatis serovar L2 (strain ATCC VR-902B / DSM 19102 / 434/Bu).